We begin with the raw amino-acid sequence, 388 residues long: Putative [LysW]-aminoadipate semialdehyde/glutamate semialdehyde transaminase (388 aa).

Pyridoxal 5'-phosphate contacts are provided by residues G100 to T101 and F127. A substrate-binding site is contributed by R130. Pyridoxal 5'-phosphate is bound at residue D211 to Q214. At K240 the chain carries N6-(pyridoxal phosphate)lysine. S268 is a binding site for substrate. Position 269 (T269) interacts with pyridoxal 5'-phosphate.

The protein belongs to the class-III pyridoxal-phosphate-dependent aminotransferase family. LysJ subfamily. As to quaternary structure, homodimer. Requires pyridoxal 5'-phosphate as cofactor.

The protein resides in the cytoplasm. The catalysed reaction is [amino-group carrier protein]-C-terminal-gamma-(L-lysyl)-L-glutamate + 2-oxoglutarate = [amino-group carrier protein]-C-terminal-N-(1-carboxy-5-oxopentan-1-yl)-L-glutamine + L-glutamate. It catalyses the reaction [amino-group carrier protein]-C-terminal-gamma-(L-ornithyl)-L-glutamate + 2-oxoglutarate = [amino-group carrier protein]-C-terminal-gamma-(L-glutamyl-5-semialdehyde)-L-glutamate + L-glutamate. It functions in the pathway amino-acid biosynthesis; L-lysine biosynthesis via AAA pathway; L-lysine from L-alpha-aminoadipate (Thermus route): step 4/5. Its pathway is amino-acid biosynthesis; L-arginine biosynthesis. Functionally, involved in both the arginine and lysine biosynthetic pathways. This Aeropyrum pernix (strain ATCC 700893 / DSM 11879 / JCM 9820 / NBRC 100138 / K1) protein is Putative [LysW]-aminoadipate semialdehyde/glutamate semialdehyde transaminase.